Consider the following 158-residue polypeptide: 2-amino-4-hydroxy-6-hydroxymethyldihydropteridine pyrophosphokinase (158 aa).

Belongs to the HPPK family.

The enzyme catalyses 6-hydroxymethyl-7,8-dihydropterin + ATP = (7,8-dihydropterin-6-yl)methyl diphosphate + AMP + H(+). It participates in cofactor biosynthesis; tetrahydrofolate biosynthesis; 2-amino-4-hydroxy-6-hydroxymethyl-7,8-dihydropteridine diphosphate from 7,8-dihydroneopterin triphosphate: step 4/4. Its function is as follows. Catalyzes the transfer of pyrophosphate from adenosine triphosphate (ATP) to 6-hydroxymethyl-7,8-dihydropterin, an enzymatic step in folate biosynthesis pathway. This is 2-amino-4-hydroxy-6-hydroxymethyldihydropteridine pyrophosphokinase (folK) from Methylorubrum extorquens (strain ATCC 14718 / DSM 1338 / JCM 2805 / NCIMB 9133 / AM1) (Methylobacterium extorquens).